Reading from the N-terminus, the 212-residue chain is Ribosomal RNA small subunit methyltransferase G (212 aa).

S-adenosyl-L-methionine contacts are provided by residues Gly-80, Leu-85, 131–132 (AE), and Arg-146.

It belongs to the methyltransferase superfamily. RNA methyltransferase RsmG family.

The protein resides in the cytoplasm. It catalyses the reaction guanosine(527) in 16S rRNA + S-adenosyl-L-methionine = N(7)-methylguanosine(527) in 16S rRNA + S-adenosyl-L-homocysteine. Functionally, specifically methylates the N7 position of guanine in position 527 of 16S rRNA. This chain is Ribosomal RNA small subunit methyltransferase G, found in Xylella fastidiosa (strain 9a5c).